We begin with the raw amino-acid sequence, 906 residues long: Cadherin-2 (906 aa).

A signal peptide spans 1–25; sequence MCRIAGAPRTLLPLLAALLQASVEA. The propeptide occupies 26 to 159; that stretch reads SGEIALCKTG…HSGALQRQKR (134 aa). Cadherin domains are found at residues 160–267, 268–382, 383–497, 498–603, and 604–717; these read DWVI…RPEF, LHQV…PPEF, TAMT…NPYF, APNP…DNAP, and QVLP…RIVG. The Extracellular portion of the chain corresponds to 160–724; the sequence is DWVIPPINLP…IVGAGLGTGA (565 aa). Glu170 is a Ca(2+) binding site. N-linked (GlcNAc...) asparagine glycosylation occurs at Asn190. 7 residues coordinate Ca(2+): Asp226, Glu228, Asp259, Met260, Asn261, Asp262, and Asn263. Asn273 is a glycosylation site (N-linked (GlcNAc...) asparagine). Positions 293, 295, and 301 each coordinate Ca(2+). Asn325 carries N-linked (GlcNAc...) asparagine glycosylation. Residue Asp353 coordinates Ca(2+). Asn402, Asn572, Asn651, and Asn692 each carry an N-linked (GlcNAc...) asparagine glycan. Residues 725-745 form a helical membrane-spanning segment; sequence IIAILLCIIILLILVLMFVVW. Over 746 to 906 the chain is Cytoplasmic; sequence MKRRDKERQA…LADMYGGGDD (161 aa). Residues 863–880 show a composition bias toward low complexity; that stretch reads SGSTAGSLSSLNSSSSGG. Positions 863-883 are disordered; the sequence is SGSTAGSLSSLNSSSSGGDQD.

As to quaternary structure, homodimer (via extracellular region). Can also form heterodimers with other cadherins (via extracellular region). Dimerization occurs in trans, i.e. with a cadherin chain from another cell. Interacts with CDCP1. Interacts with PCDH8; this complex may also include TAOK2. The interaction with PCDH8 may lead to internalization through TAOK2/p38 MAPK pathway. Identified in a complex containing FGFR4, NCAM1, CDH2, PLCG1, FRS2, SRC, SHC1, GAP43 and CTTN. May interact with OBSCN (via protein kinase domain 2). Interacts with FBXO45. Post-translationally, cleaved by MMP24. Ectodomain cleavage leads to the generation of a soluble 90 kDa N-terminal soluble fragment and a 45 kDa membrane-bound C-terminal fragment 1 (CTF1), which is further cleaved by gamma-secretase into a 35 kDa. Cleavage in neural stem cells by MMP24 affects CDH2-mediated anchorage of neural stem cells to ependymocytes in the adult subependymal zone, leading to modulate neural stem cell quiescence. May be phosphorylated by OBSCN. In terms of processing, O-glycosylated on Ser and Thr residues. Expressed in cardiac muscle (at protein level).

The protein localises to the cell membrane. The protein resides in the sarcolemma. Its subcellular location is the cell junction. It localises to the adherens junction. It is found in the desmosome. The protein localises to the cell surface. Its function is as follows. Calcium-dependent cell adhesion protein; preferentially mediates homotypic cell-cell adhesion by dimerization with a CDH2 chain from another cell. Cadherins may thus contribute to the sorting of heterogeneous cell types. Acts as a regulator of neural stem cells quiescence by mediating anchorage of neural stem cells to ependymocytes in the adult subependymal zone: upon cleavage by MMP24, CDH2-mediated anchorage is affected, leading to modulate neural stem cell quiescence. Plays a role in cell-to-cell junction formation between pancreatic beta cells and neural crest stem (NCS) cells, promoting the formation of processes by NCS cells. Required for proper neurite branching. Required for pre- and postsynaptic organization. CDH2 may be involved in neuronal recognition mechanism. In hippocampal neurons, may regulate dendritic spine density. This Mus musculus (Mouse) protein is Cadherin-2 (Cdh2).